A 380-amino-acid polypeptide reads, in one-letter code: Zinc finger protein neuro-d4 (380 aa).

The tract at residues 132 to 164 (ALLDCQKPPPGDFAHDAEGDEMEDDAPRRKNKA) is disordered. A C2H2-type zinc finger spans residues 190 to 213 (YVCDICGKRYKNRPGLSYHYTHTH). 2 PHD-type zinc fingers span residues 262–321 (EGPC…CKNC) and 318–368 (CKNC…CLRQ). 16 residues coordinate Zn(2+): Cys265, Cys268, Cys286, Cys289, His294, Cys297, Cys315, Cys318, Cys321, Cys324, Cys336, Cys339, His344, Cys347, Cys362, and Cys365.

This sequence belongs to the requiem/DPF family. As to quaternary structure, component of neuron-specific chromatin remodeling complex (nBAF complex), a subfamily of ATP-dependent SWI/SNF chromatin remodeling complexes.

It is found in the cytoplasm. It localises to the nucleus. May have an important role in developing neurons by participating in regulation of cell survival, possibly as a neurospecific transcription factor. Belongs to the neuron-specific chromatin remodeling complex (nBAF complex) and plays a role in neural development. This Gallus gallus (Chicken) protein is Zinc finger protein neuro-d4.